The primary structure comprises 766 residues: MDTGVVPEKKSRVSSDRRKEKSRDAARCRRGKESEVFYELAQELPLPHSVTSNLDKASIMRLAISYLHMRNLLSTDNEEEQEEREMDSQLNGSYLKAIEGFLMVLSEDGDMIYLSENVNKCLGLAQIDLTGLSVFEYTHPCDHEELREMLVHRTGTSKKSKEPNTERSFFLRMKCTLTNRGRTVNVKSATWKVLHCSDHVRVHESPAEQIPGGHKEPSVPYLVLVCDPIPHPSNIEAPLDTKTFLSRHTLDMKFTYCDERITELMGYDPEDLLNRSVYEYYHALDSDHLMKTHHNLFAKGQVSTGQYRMLAKRGGFVWVETQATVIYNNKNSQPQCVVCVNYVLSGIEEEKMMLSLEQTEDMRPVKKELEEEESSEPEVSPVLLKEEKSPELDVIKLFTRAVETQPLSSLYDRLKEEPEALTLLAPAAGDTIISLDFSSPDSDILQKEVPLYKDVMLPSTSDKLALPLSLLPPSDQHLVPNTSVDTTEVSTGPDSSSTPGSHSFTEPDSPLDFCFPMESDINAEFKLDMVETLFAINPEPKTPFTLQAMEDLDLEMLAPYIPMDDDFQLRTLSPEEPLSCGPAQPLECSSLCSSVRLTQEVHSYPGSPFNAPGSLTASPALAASPALAAPEPADSPCPASLLTKTVPQMDREISLRSLASQNAQRKRKMSLSQAVGIGGLLQDHPGPGKKLKVSELSHADAPFNRTILLLPTDLASRLLGISSEGSGSPFTLPQLTRYDCEVNAPVGGRQLLLQGEELLSALDQVN.

Residues 1–26 (MDTGVVPEKKSRVSSDRRKEKSRDAA) form a disordered region. The segment covering 7-26 (PEKKSRVSSDRRKEKSRDAA) has biased composition (basic and acidic residues). The bHLH domain maps to 17-70 (RRKEKSRDAARCRRGKESEVFYELAQELPLPHSVTSNLDKASIMRLAISYLHMR). 2 consecutive PAS domains span residues 82–159 (EERE…TSKK) and 230–300 (PHPS…FAKG). One can recognise a PAC domain in the interval 304–347 (TGQYRMLAKRGGFVWVETQATVIYNNKNSQPQCVVCVNYVLSGI). The disordered stretch occupies residues 361 to 383 (DMRPVKKELEEEESSEPEVSPVL). Pro426 carries the 4-hydroxyproline modification. Positions 475–509 (DQHLVPNTSVDTTEVSTGPDSSSTPGSHSFTEPDS) are disordered. Positions 479-489 (VPNTSVDTTEV) are enriched in polar residues. A compositionally biased stretch (low complexity) spans 490–503 (STGPDSSSTPGSHS). Pro559 is subject to 4-hydroxyproline. The Nuclear localization signal signature appears at 718–721 (LLGI). (3S)-3-hydroxyasparagine is present on Asn743.

Efficient DNA binding requires heterodimerization of an alpha and a beta/ARNT subunit. In normoxia, is hydroxylated on Pro-426 and Pro-559. The hydroxylated prolines promote interaction with VHL, initiating rapid ubiquitination and subsequent proteasomal degradation. Under hypoxia, proline hydroxylation is impaired and ubiquitination is attenuated, resulting in stabilization. In terms of processing, in normoxia, is hydroxylated on Asn-743, thus abrogating interaction with CREBBP and EP300 and preventing transcriptional activation. Post-translationally, the iron and 2-oxoglutarate dependent 3-hydroxylation of asparagine is (S) stereospecific within HIF CTAD domains.

It localises to the cytoplasm. The protein resides in the nucleus. The protein localises to the nucleus speckle. Induced by reactive oxygen species (ROS). Functionally, functions as a master transcriptional regulator of the adaptive response to hypoxia. Under hypoxic conditions, activates the transcription of over 40 genes, including erythropoietin, glucose transporters, glycolytic enzymes, vascular endothelial growth factor, HILPDA, and other genes whose protein products increase oxygen delivery or facilitate metabolic adaptation to hypoxia. Plays an essential role in embryonic vascularization, tumor angiogenesis and pathophysiology of ischemic disease. In Oncorhynchus mykiss (Rainbow trout), this protein is Hypoxia-inducible factor 1-alpha (hif1a).